The following is a 619-amino-acid chain: Kininogen-2 (619 aa).

Positions 1 to 18 are cleaved as a signal peptide; it reads MKLITILFLCSRLLPSLT. Pyrrolidone carboxylic acid is present on Gln-19. Residues 27–131 form the Cystatin kininogen-type 1 domain; sequence CNDQDVFKAV…IQTCLITPAE (105 aa). Cystine bridges form between Cys-27–Cys-589, Cys-82–Cys-93, Cys-106–Cys-125, Cys-141–Cys-144, Cys-205–Cys-217, Cys-228–Cys-247, Cys-261–Cys-264, Cys-325–Cys-337, and Cys-348–Cys-367. An N-linked (GlcNAc...) asparagine glycan is attached at Asn-87. Thr-136 carries O-linked (GalNAc...) threonine; partial glycosylation. One can recognise a Cystatin kininogen-type 2 domain in the interval 150 to 253; that stretch reads TKSPDLEPVL…SQKCDLYPGE (104 aa). 2 N-linked (GlcNAc...) asparagine glycosylation sites follow: Asn-168 and Asn-169. Asn-197 carries N-linked (GlcNAc...) asparagine; partial glycosylation. Asn-204 carries N-linked (GlcNAc...) asparagine glycosylation. The Cystatin kininogen-type 3 domain maps to 270-373; sequence VDSPDLEEAL…TVNCQPLGQT (104 aa). Asn-280 is a glycosylation site (N-linked (GlcNAc...) asparagine). Residue Pro-380 is modified to 4-hydroxyproline. Residues 394–495 are disordered; sequence EGSTTVSLPH…GKNNGKHYDW (102 aa). Ser-396 carries an O-linked (GalNAc...) serine glycan. 2 O-linked (GalNAc...) threonine glycosylation sites follow: Thr-397 and Thr-398. 2 O-linked (GalNAc...) serine glycosylation sites follow: Ser-400 and Ser-404. The segment covering 442-490 has biased composition (basic residues); that stretch reads GHKHKHDQGHGHHRSHGLGHGHQKQHGLGHGHKHGHGHGKHKNKGKNNG. A glycan (O-linked (GalNAc...) serine) is linked at Ser-510. Thr-518, Thr-522, Thr-534, Thr-546, Thr-551, and Thr-568 each carry an O-linked (GalNAc...) threonine glycan.

Bradykinin is released from kininogen by plasma kallikrein. As to expression, plasma.

The protein localises to the secreted. It is found in the extracellular space. (1) Kininogens are inhibitors of thiol proteases; (2) HMW-kininogen plays an important role in blood coagulation by helping to position optimally prekallikrein and factor XI next to factor XII; (3) HMW-kininogen inhibits the thrombin- and plasmin-induced aggregation of thrombocytes; (4) the active peptide bradykinin that is released from HMW-kininogen shows a variety of physiological effects: (4A) influence in smooth muscle contraction, (4B) induction of hypotension, (4C) natriuresis and diuresis, (4D) decrease in blood glucose level, (4E) it is a mediator of inflammation and causes (4E1) increase in vascular permeability, (4E2) stimulation of nociceptors (4E3) release of other mediators of inflammation (e.g. prostaglandins), (4F) it has a cardioprotective effect (directly via bradykinin action, indirectly via endothelium-derived relaxing factor action); (5) LMW-kininogen inhibits the aggregation of thrombocytes; (6) LMW-kininogen is in contrast to HMW-kininogen not involved in blood clotting. In Bos taurus (Bovine), this protein is Kininogen-2 (KNG2).